The primary structure comprises 234 residues: Ankyrin repeat-containing protein C6C3.08 (234 aa).

ANK repeat units lie at residues 36–66 (DKRT…KPDE), 70–100 (AGWT…DVDP), 106–135 (GGQT…ELIR), 140–169 (QGQT…PLNT), and 173–203 (YGFT…TLRK).

In Schizosaccharomyces pombe (strain 972 / ATCC 24843) (Fission yeast), this protein is Ankyrin repeat-containing protein C6C3.08.